A 200-amino-acid polypeptide reads, in one-letter code: Probable GTP-binding protein EngB (200 aa).

Residues 22–197 enclose the EngB-type G domain; sequence NLPEYAFIGR…LDYIDSINRS (176 aa). GTP is bound by residues 30 to 37, 57 to 61, 75 to 78, 142 to 145, and 173 to 178; these read GRSNVGKS, GKTLL, DLPG, TKAD, and HFVSSS. Mg(2+) contacts are provided by S37 and T59.

Belongs to the TRAFAC class TrmE-Era-EngA-EngB-Septin-like GTPase superfamily. EngB GTPase family. Mg(2+) is required as a cofactor.

Necessary for normal cell division and for the maintenance of normal septation. This is Probable GTP-binding protein EngB from Phocaeicola vulgatus (strain ATCC 8482 / DSM 1447 / JCM 5826 / CCUG 4940 / NBRC 14291 / NCTC 11154) (Bacteroides vulgatus).